A 247-amino-acid chain; its full sequence is Uridylate kinase (247 aa).

Residue 14 to 17 (KLSG) coordinates ATP. The segment at 22 to 27 (GERGVG) is involved in allosteric activation by GTP. A UMP-binding site is contributed by Gly-56. Gly-57 and Arg-61 together coordinate ATP. UMP contacts are provided by residues Asp-76 and 137–144 (IGSPYFST). Positions 165, 171, and 174 each coordinate ATP.

This sequence belongs to the UMP kinase family. Homohexamer.

Its subcellular location is the cytoplasm. The catalysed reaction is UMP + ATP = UDP + ADP. The protein operates within pyrimidine metabolism; CTP biosynthesis via de novo pathway; UDP from UMP (UMPK route): step 1/1. Its activity is regulated as follows. Allosterically activated by GTP. Inhibited by UTP. Functionally, catalyzes the reversible phosphorylation of UMP to UDP. The sequence is that of Uridylate kinase from Streptococcus pneumoniae (strain ATCC BAA-255 / R6).